The chain runs to 793 residues: 3',5'-cyclic-nucleotide phosphodiesterase regA (793 aa).

Residues 1–153 (MNNKQEEIDQ…SSHRVSDFSD (153 aa)) form a disordered region. 3 stretches are compositionally biased toward low complexity: residues 13–34 (SSTS…DSTS), 54–69 (NKNN…SNNN), and 80–121 (NNSS…NNNN). Residues 161–280 (RILVADDDDV…LLKKKIDTVL (120 aa)) enclose the Response regulatory domain. D212 is subject to 4-aspartylphosphate. The 324-residue stretch at 410–733 (RRNSIPTFPQ…ENWQAYMELQ (324 aa)) folds into the PDEase domain. H487 serves as the catalytic Proton donor. Residues H491, H527, D528, and D639 each contribute to the a divalent metal cation site. The segment at 756 to 793 (KLPKIDEEENRDKVSSSSSSSTAPLTSTSSSNNETSSS) is disordered. Positions 770–793 (SSSSSSSTAPLTSTSSSNNETSSS) are enriched in low complexity.

Belongs to the cyclic nucleotide phosphodiesterase family. It depends on a divalent metal cation as a cofactor. Post-translationally, the phosphorelay mechanism involves the sequential transfer of a phosphate group from Asp-212 of pde2 to 'His-65' of rdeA. Phosphorylation of Asp-212 activates the phosphodiesterase domain.

Its subcellular location is the cytoplasm. The protein resides in the cytosol. The catalysed reaction is 3',5'-cyclic AMP + H2O = AMP + H(+). Inhibited by 3-isobutyl-1-methylxanthine (IBMX). Phosphodiesterase specific for cAMP. Involved in the degradation of intracellular cAMP. Morphological suppressor of tagB. Phosphorelay protein that accepts phosphate from rdeA or supplies phosphate from regA; depending on the relative concentration of the phosphodonor proteins. In Dictyostelium discoideum (Social amoeba), this protein is 3',5'-cyclic-nucleotide phosphodiesterase regA (regA).